Consider the following 767-residue polypeptide: Photosystem I P700 chlorophyll a apoprotein A1 (767 aa).

The segment at 1–22 (MTISPPESGEKDKKILESPVKA) is disordered. A compositionally biased stretch (basic and acidic residues) spans 8–22 (SGEKDKKILESPVKA). 8 helical membrane passes run 76-99 (IFSA…FHGA), 162-185 (LMAL…FHYH), 201-225 (LNHH…HIGA), 309-327 (VSHH…GHMY), 368-391 (RHAQ…HHMY), 407-433 (LGLF…IAMV), 455-477 (ALIS…LYIH), and 558-576 (LMIH…LILL). The [4Fe-4S] cluster site is built by Cys600 and Cys609. The next 2 membrane-spanning stretches (helical) occupy residues 616-637 (HVFL…HFSW) and 681-703 (ISMY…MFLF). Residue His692 participates in divinylchlorophyll a' binding. Residues Met700 and Tyr708 each coordinate divinyl chlorophyll a. Residue Trp709 coordinates phylloquinone. The chain crosses the membrane as a helical span at residues 741 to 761 (AVGVTHFLVGGIATTWAFFHA).

This sequence belongs to the PsaA/PsaB family. As to quaternary structure, the PsaA/B heterodimer binds the P700 divinyl chlorophyll special pair and subsequent electron acceptors. PSI consists of a core antenna complex that captures photons, and an electron transfer chain that converts photonic excitation into a charge separation. The cyanobacterial PSI reaction center is composed of one copy each of PsaA,B,C,D,E,F,I,J,K,L,M and X, and forms trimeric complexes. It depends on PSI electron transfer chain: 5 divinyl chlorophyll a, 1 divinyl chlorophyll a', 2 phylloquinones and 3 4Fe-4S clusters. PSI core antenna: 90 divinyl chlorophyll a, 22 carotenoids, 3 phospholipids and 1 galactolipid. P700 is a divinyl chlorophyll a/divinyl chlorophyll a' dimer, A0 is one or more divinyl chlorophyll a, A1 is one or both phylloquinones and FX is a shared 4Fe-4S iron-sulfur center. as a cofactor.

It localises to the cellular thylakoid membrane. It catalyses the reaction reduced [plastocyanin] + hnu + oxidized [2Fe-2S]-[ferredoxin] = oxidized [plastocyanin] + reduced [2Fe-2S]-[ferredoxin]. Its function is as follows. PsaA and PsaB bind P700, the primary electron donor of photosystem I (PSI), as well as the electron acceptors A0, A1 and FX. PSI is a plastocyanin/cytochrome c6-ferredoxin oxidoreductase, converting photonic excitation into a charge separation, which transfers an electron from the donor P700 chlorophyll pair to the spectroscopically characterized acceptors A0, A1, FX, FA and FB in turn. Oxidized P700 is reduced on the lumenal side of the thylakoid membrane by plastocyanin or cytochrome c6. The protein is Photosystem I P700 chlorophyll a apoprotein A1 of Prochlorococcus marinus subsp. pastoris (strain CCMP1986 / NIES-2087 / MED4).